Reading from the N-terminus, the 73-residue chain is Small ribosomal subunit protein bS18 (73 aa).

The protein belongs to the bacterial ribosomal protein bS18 family. In terms of assembly, part of the 30S ribosomal subunit. Forms a tight heterodimer with protein bS6.

Binds as a heterodimer with protein bS6 to the central domain of the 16S rRNA, where it helps stabilize the platform of the 30S subunit. The polypeptide is Small ribosomal subunit protein bS18 (Synechococcus sp. (strain RCC307)).